The following is a 285-amino-acid chain: Putative sugar uptake protein lp_2503 (285 aa).

9 helical membrane-spanning segments follow: residues 2 to 21 (GILIALIPAIAWGSIGLISG), 31 to 48 (TLGMTMGALVFGLALWAV), 55 to 72 (SKIWLIGIVSGLFWSIGQ), 112 to 134 (GNMYWIGSASVIVLIAGAVLTSL), 147 to 169 (NWGVGIRALILSTIGYAGYTIVV), 179 to 196 (VVMPQAVGMLLGALIWSF), 209 to 228 (NIVTGLVWGIGNLFMFMAMA), 233 to 255 (AVAYSLSQMGIVISTFGSIYLLG), and 264 to 283 (VYVVIGSILVIVGGVALSLM).

This sequence belongs to the GRP transporter (TC 2.A.7.5) family.

The protein resides in the cell membrane. The chain is Putative sugar uptake protein lp_2503 from Lactiplantibacillus plantarum (strain ATCC BAA-793 / NCIMB 8826 / WCFS1) (Lactobacillus plantarum).